The primary structure comprises 288 residues: Oxaloacetate decarboxylase (288 aa).

Ser-47 is a binding site for substrate. Asp-85 lines the Mg(2+) pocket. Substrate is bound by residues Arg-156 and His-232.

Belongs to the isocitrate lyase/PEP mutase superfamily. Oxaloacetate decarboxylase family. Homotetramer; dimer of dimers. Mg(2+) serves as cofactor.

It carries out the reaction oxaloacetate + H(+) = pyruvate + CO2. Its function is as follows. Catalyzes the decarboxylation of oxaloacetate into pyruvate. Seems to play a role in maintaining cellular concentrations of bicarbonate and pyruvate. This Rhodopseudomonas palustris (strain TIE-1) protein is Oxaloacetate decarboxylase.